The primary structure comprises 540 residues: MAKQIKYGEEARKALERGVNAVANTVKVTLGPRGRNVVLDKKYGTPTVTNDGVTIAREIELEDPFENQGAQLLKEAATKTNDVAGDGTTTATLLAQVMVLEGLKNLAAGANPMLLRRGMAKAVEAAVEGLRRISKPIDNKESIAHVAAISAADEEIGQLIAEAMEKVGKDGVITVEESKTIGTTLEVVEGMQFDRGYISPYMVTDAEKMEAVLEEPVILITDKKLSSVQDLLPLLEQIVQHGKKLLIIADDVEGEALATLVVNKLRGTFSCVAVKAPGFGDRRKEMLQDIAILTGGQVISEELGYDLKDVTLDMLGRARQVKVTKEHTTIVGGAGNPEDIKKRINQIKAQIEETTSDYDREKLQERLAKLAGGVAVIQVGAATETELKEKKHRIEDALAATKAAVEEGIVPGGGVALLNVIEDVQKVVDSLEGDFKTGAKIVLKALEAPVRQIAENAGVDGSIIVEKIKAAKDPNFGYDAYREEFTDMIKRGIIDPTKVTRTALQNAASIASMILTTEAIVVDVPEKEKSNIPGAGMDMM.

ATP-binding positions include 29-32, 86-90, Gly413, and Asp495; these read TLGP and DGTTT.

This sequence belongs to the chaperonin (HSP60) family. As to quaternary structure, forms a cylinder of 14 subunits composed of two heptameric rings stacked back-to-back. Interacts with the co-chaperonin GroES.

Its subcellular location is the cytoplasm. It catalyses the reaction ATP + H2O + a folded polypeptide = ADP + phosphate + an unfolded polypeptide.. Functionally, together with its co-chaperonin GroES, plays an essential role in assisting protein folding. The GroEL-GroES system forms a nano-cage that allows encapsulation of the non-native substrate proteins and provides a physical environment optimized to promote and accelerate protein folding. This chain is Chaperonin GroEL, found in Caldanaerobacter subterraneus subsp. tengcongensis (strain DSM 15242 / JCM 11007 / NBRC 100824 / MB4) (Thermoanaerobacter tengcongensis).